The chain runs to 259 residues: Thrombin-like enzyme gyroxin B1.7 (259 aa).

The N-terminal stretch at 1-18 is a signal peptide; sequence MVLIRVLANLLILQLSYA. Residues 19 to 259 constitute a propeptide that is removed on maturation; the sequence is QKSSELVIGG…AGNTAVTCPP (241 aa). Residues 25–250 form the Peptidase S1 domain; that stretch reads VIGGDECNIN…DTEWIQSIIA (226 aa). 5 disulfide bridges follow: Cys-31-Cys-162, Cys-49-Cys-65, Cys-141-Cys-211, Cys-173-Cys-190, and Cys-201-Cys-226. The Charge relay system role is filled by His-64. The N-linked (GlcNAc...) asparagine glycan is linked to Asn-102. The active-site Charge relay system is Asp-109. The Charge relay system role is filled by Ser-205.

Belongs to the peptidase S1 family. Snake venom subfamily. As to quaternary structure, monomer. In terms of tissue distribution, expressed by the venom gland.

Its subcellular location is the secreted. Functionally, thrombin-like snake venom serine protease. Displays a specificity similar to trypsin. Releases only fibrinopeptide A in the conversion of fibrinogen to fibrin. Shows coagulant, esterase and amidase activities. Reversibly increases the permeability of the blood brain barrier (BBB) in mice. Induces the barrel rotation syndrome in mice, which is manifested by gyroxin-like, rapid rolling motions. This syndrome may be due to its effect on BBB permeability, and certainly also to other actions affecting endogenous substrates present in the endothelium, nervous tissues or blood. This chain is Thrombin-like enzyme gyroxin B1.7, found in Crotalus durissus terrificus (South American rattlesnake).